The chain runs to 276 residues: Triple specificity protein phosphatase PtpB (276 aa).

Catalysis depends on C160, which acts as the Phosphocysteine intermediate. Positions L232–Y250 are UIM-like region.

The protein belongs to the protein-tyrosine phosphatase family. As to quaternary structure, interacts (via UIM-like region) with host ubiquitin; activating the phosphatidylinositol phosphate phosphatase activity.

Its subcellular location is the secreted. The protein localises to the host cytoplasm. It is found in the host cell membrane. The enzyme catalyses O-phospho-L-tyrosyl-[protein] + H2O = L-tyrosyl-[protein] + phosphate. It catalyses the reaction O-phospho-L-seryl-[protein] + H2O = L-seryl-[protein] + phosphate. It carries out the reaction O-phospho-L-threonyl-[protein] + H2O = L-threonyl-[protein] + phosphate. The catalysed reaction is 1,2-dioctanoyl-sn-glycero-3-phospho-(1-D-myo-inositol-3-phosphate) + H2O = 1,2-dioctanoyl-sn-glycero-3-phospho-(1D-myo-inositol) + phosphate. The enzyme catalyses 1,2-dioctanoyl-sn-glycero-3-phospho-(1-D-myo-inositol-4-phosphate) + H2O = 1,2-dioctanoyl-sn-glycero-3-phospho-(1D-myo-inositol) + phosphate. It catalyses the reaction 1,2-dioctanoyl-sn-glycero-3-phospho-(1D-myo-inositol-5-phosphate) + H2O = 1,2-dioctanoyl-sn-glycero-3-phospho-(1D-myo-inositol) + phosphate. With respect to regulation, binding to host ubiquitin is required to activate the phosphatidylinositol phosphate phosphatase activity. Phosphatase activity is inhibited by sodium orthovanadate, a specific inhibitor of tyrosine phosphatases, but not by okadaic acid, an inhibitor of serine/threonine phosphatases. Inhibition of the enzyme reduces mycobacterial survival in infected macrophages. Inhibitors also enhance killing efficacy by first-line antibiotics. Its function is as follows. Essential virulence factor that promotes mycobacterial survival within host macrophages. Acts as a phosphatase that possesses triple substrate specificity toward phosphotyrosine, phosphoserine/threonine and phosphoinositides. Supports mycobacteria survival during infection by modulating the normal host signaling pathways, attenuating the bactericidal immune responses and promoting the host cell survival. Inhibits host pyroptosis by disrupting the membrane localization of host gasdermin-D (GSDMD): acts by catalyzing dephosphorylation of phosphatidylinositol (4,5)-bisphosphate and phosphatidylinositol 4-phosphate, thereby inhibiting the membrane targeting of GSDMD and subsequent cytokine release and pyroptosis. Inhibits host inflammatory responses and apoptosis through impeding the NF-kappa-B and MAPK signal pathways and TP53/p53 expression in the macrophage. Blocks the IL6/IL-6 production by down-regulating ERK1/2, p38 and p65 activity. Prevents macrophage cell death by activating the Akt pathway and blocking caspase 3 activity. Reduces the expression of iNOS in activated macrophages and inhibits the generation of destroying reactive nitrogen intermediate NO. In Mycobacterium tuberculosis (strain ATCC 25618 / H37Rv), this protein is Triple specificity protein phosphatase PtpB.